We begin with the raw amino-acid sequence, 223 residues long: uncharacterized protein (223 aa).

Positions 1–30 (MASATVRNVPLLDDDTIPFGEEDEMRDPSR) are disordered. Residues 12–25 (LDDDTIPFGEEDEM) are compositionally biased toward acidic residues. Transmembrane regions (helical) follow at residues 35–55 (YTHP…ILIY), 56–76 (MFCG…VLFL), 129–149 (IFWL…LFAL), and 154–174 (FKWL…LYGY).

The protein belongs to the TVP23 family.

The protein resides in the membrane. This is an uncharacterized protein from Drosophila melanogaster (Fruit fly).